We begin with the raw amino-acid sequence, 487 residues long: Glutamyl-tRNA(Gln) amidotransferase subunit A (487 aa).

Catalysis depends on charge relay system residues lysine 77 and serine 152. The active-site Acyl-ester intermediate is the serine 176.

It belongs to the amidase family. GatA subfamily. Heterotrimer of A, B and C subunits.

The enzyme catalyses L-glutamyl-tRNA(Gln) + L-glutamine + ATP + H2O = L-glutaminyl-tRNA(Gln) + L-glutamate + ADP + phosphate + H(+). Allows the formation of correctly charged Gln-tRNA(Gln) through the transamidation of misacylated Glu-tRNA(Gln) in organisms which lack glutaminyl-tRNA synthetase. The reaction takes place in the presence of glutamine and ATP through an activated gamma-phospho-Glu-tRNA(Gln). This is Glutamyl-tRNA(Gln) amidotransferase subunit A from Ligilactobacillus salivarius (strain UCC118) (Lactobacillus salivarius).